The primary structure comprises 187 residues: Ribosome-recycling factor (187 aa).

The protein belongs to the RRF family.

The protein localises to the cytoplasm. Its function is as follows. Responsible for the release of ribosomes from messenger RNA at the termination of protein biosynthesis. May increase the efficiency of translation by recycling ribosomes from one round of translation to another. The sequence is that of Ribosome-recycling factor from Rhodopseudomonas palustris (strain BisA53).